Reading from the N-terminus, the 199-residue chain is Thymidine kinase (199 aa).

Residues 9–16 and 93–96 contribute to the ATP site; these read GAMSSGKS and DEAQ. The active-site Proton acceptor is Glu94. Cys151, Cys154, Cys188, and His191 together coordinate Zn(2+).

It belongs to the thymidine kinase family. As to quaternary structure, homotetramer.

It is found in the cytoplasm. The catalysed reaction is thymidine + ATP = dTMP + ADP + H(+). This Lactobacillus johnsonii (strain CNCM I-12250 / La1 / NCC 533) protein is Thymidine kinase.